Reading from the N-terminus, the 579-residue chain is Rhoptry surface protein CERLI2 (579 aa).

One can recognise a C2 domain in the interval 52 to 84 (LHNYRTFYLLIKINEIFNINKYKQIYIIVNTDK). Repeat copies occupy residues 442–451 (QTDEIKNDNI), 452–461 (QTDEIKNDHI), 462–471 (QTDEIKNDNI), 472–481 (QTDEIKNDNI), 482–491 (QTDEIKNDHI), 492–501 (QTDEIKNDNI), 502–511 (QTDEIKNDNI), 522–531 (QTDEINNDHI), 532–541 (QTDEIKNDHI), 542–551 (QTDEIKNDHI), and 552–561 (QTDEIKNDIN). Residues 442 to 561 (QTDEIKNDNI…QTDEIKNDIN (120 aa)) form a 12 X 10 AA tandem repeat of Q-T-E-I-[K/N]-N-D-[H/N/I][I/N] region.

It localises to the cytoplasmic vesicle. The protein resides in the secretory vesicle. It is found in the rhoptry membrane. Its subcellular location is the cell membrane. The protein localises to the host cell membrane. Plays an important role in rhoptry physiology and thus is essential for merozoite invasion of host erythrocytes. This chain is Rhoptry surface protein CERLI2, found in Plasmodium falciparum (isolate 3D7).